A 294-amino-acid chain; its full sequence is UDP-3-O-acyl-N-acetylglucosamine deacetylase (294 aa).

Zn(2+) is bound by residues histidine 75, histidine 232, and aspartate 236. Histidine 259 acts as the Proton donor in catalysis.

The protein belongs to the LpxC family. The cofactor is Zn(2+).

It carries out the reaction a UDP-3-O-[(3R)-3-hydroxyacyl]-N-acetyl-alpha-D-glucosamine + H2O = a UDP-3-O-[(3R)-3-hydroxyacyl]-alpha-D-glucosamine + acetate. It participates in glycolipid biosynthesis; lipid IV(A) biosynthesis; lipid IV(A) from (3R)-3-hydroxytetradecanoyl-[acyl-carrier-protein] and UDP-N-acetyl-alpha-D-glucosamine: step 2/6. Catalyzes the hydrolysis of UDP-3-O-myristoyl-N-acetylglucosamine to form UDP-3-O-myristoylglucosamine and acetate, the committed step in lipid A biosynthesis. The chain is UDP-3-O-acyl-N-acetylglucosamine deacetylase from Campylobacter fetus subsp. fetus (strain 82-40).